The chain runs to 267 residues: Very long chain fatty acid elongase 6 (267 aa).

N2 carries an N-linked (GlcNAc...) asparagine glycan. The next 7 membrane-spanning stretches (helical) occupy residues 34–51 (FLFS…RHLM), 70–90 (LAVF…YILM), 111–131 (FWAY…IFII), 136–156 (KLIF…WYSY), 159–179 (MVAG…VMYS), 197–217 (FITL…YLVF), and 234–254 (IFWS…FFFE).

The protein belongs to the ELO family. ELOVL6 subfamily. N-Glycosylated. As to expression, highly expressed in adrenal gland, liver, white adipose tissue (WAT), adult and fetal brain, cerebellum, spinal cord, testis, skin and peripheral nerve; where lipogenesis and steroidogenesis are active. Weakly expressed in kidney, heart, skeletal muscle, lung, and spleen.

It localises to the endoplasmic reticulum membrane. It carries out the reaction a very-long-chain acyl-CoA + malonyl-CoA + H(+) = a very-long-chain 3-oxoacyl-CoA + CO2 + CoA. The enzyme catalyses hexadecanoyl-CoA + malonyl-CoA + H(+) = 3-oxooctadecanoyl-CoA + CO2 + CoA. The catalysed reaction is (9Z)-hexadecenoyl-CoA + malonyl-CoA + H(+) = 3-oxo-(11Z)-octadecenoyl-CoA + CO2 + CoA. It catalyses the reaction dodecanoyl-CoA + malonyl-CoA + H(+) = 3-oxotetradecanoyl-CoA + CO2 + CoA. It carries out the reaction tetradecanoyl-CoA + malonyl-CoA + H(+) = 3-oxohexadecanoyl-CoA + CO2 + CoA. The enzyme catalyses (9Z)-octadecenoyl-CoA + malonyl-CoA + H(+) = 3-oxo-(11Z)-eicosenoyl-CoA + CO2 + CoA. The catalysed reaction is (9Z,12Z)-octadecadienoyl-CoA + malonyl-CoA + H(+) = (11Z,14Z)-3-oxoicosa-11,14-dienoyl-CoA + CO2 + CoA. It catalyses the reaction (9Z,12Z,15Z)-octadecatrienoyl-CoA + malonyl-CoA + H(+) = (11Z,14Z,17Z)-3-oxoeicosatrienoyl-CoA + CO2 + CoA. It participates in lipid metabolism; fatty acid biosynthesis. The reaction is stimulated by the presence of HSD17B12, the enzyme catalyzing the second step of the elongation cycle. Its function is as follows. Catalyzes the first and rate-limiting reaction of the four reactions that constitute the long-chain fatty acids elongation cycle. This endoplasmic reticulum-bound enzymatic process allows the addition of 2 carbons to the chain of long- and very long-chain fatty acids (VLCFAs) per cycle. Condensing enzyme that elongates fatty acids with 12, 14 and 16 carbons with higher activity toward C16:0 acyl-CoAs. Catalyzes the synthesis of unsaturated C16 long chain fatty acids and, to a lesser extent, C18:0 and those with low desaturation degree. May participate in the production of saturated and monounsaturated VLCFAs of different chain lengths that are involved in multiple biological processes as precursors of membrane lipids and lipid mediators. This is Very long chain fatty acid elongase 6 from Mus musculus (Mouse).